We begin with the raw amino-acid sequence, 309 residues long: Tyrosine recombinase XerD (309 aa).

A Core-binding (CB) domain is found at 3-88 (MRASLAIENF…ALRQFFRFLY (86 aa)). The Tyr recombinase domain occupies 109–302 (PLPKIMSVEN…LEERLHKLVS (194 aa)). Active-site residues include Arg158, Lys182, His254, Arg257, and His280. Residue Tyr289 is the O-(3'-phospho-DNA)-tyrosine intermediate of the active site.

The protein belongs to the 'phage' integrase family. XerD subfamily. Forms a cyclic heterotetrameric complex composed of two molecules of XerC and two molecules of XerD.

The protein resides in the cytoplasm. Functionally, site-specific tyrosine recombinase, which acts by catalyzing the cutting and rejoining of the recombining DNA molecules. The XerC-XerD complex is essential to convert dimers of the bacterial chromosome into monomers to permit their segregation at cell division. It also contributes to the segregational stability of plasmids. In Brucella melitensis biotype 1 (strain ATCC 23456 / CCUG 17765 / NCTC 10094 / 16M), this protein is Tyrosine recombinase XerD.